Here is a 98-residue protein sequence, read N- to C-terminus: Large ribosomal subunit protein uL23 (98 aa).

This sequence belongs to the universal ribosomal protein uL23 family. Part of the 50S ribosomal subunit. Contacts protein L29, and trigger factor when it is bound to the ribosome.

Its function is as follows. One of the early assembly proteins it binds 23S rRNA. One of the proteins that surrounds the polypeptide exit tunnel on the outside of the ribosome. Forms the main docking site for trigger factor binding to the ribosome. This is Large ribosomal subunit protein uL23 from Borreliella afzelii (strain PKo) (Borrelia afzelii).